The primary structure comprises 419 residues: Histidine--tRNA ligase (419 aa).

It belongs to the class-II aminoacyl-tRNA synthetase family.

It localises to the cytoplasm. The catalysed reaction is tRNA(His) + L-histidine + ATP = L-histidyl-tRNA(His) + AMP + diphosphate + H(+). The chain is Histidine--tRNA ligase from Pyrobaculum arsenaticum (strain DSM 13514 / JCM 11321 / PZ6).